Reading from the N-terminus, the 94-residue chain is U27-theraphotoxin-Cg1a (94 aa).

The signal sequence occupies residues 1–22; sequence MIFLLPPVIFVMLLAESVLILG. The propeptide occupies 23-58; it reads DSEDADLMEMVQMSRPFFNPIIPAVEFVDLREERQR. Cystine bridges form between C60/C78, C67/C83, and C77/C88.

Belongs to the neurotoxin 14 (magi-1) family. OAIP-1 subfamily. As to expression, expressed by the venom gland.

The protein localises to the secreted. In terms of biological role, probable ion channel inhibitor. The polypeptide is U27-theraphotoxin-Cg1a (Chilobrachys guangxiensis (Chinese earth tiger tarantula)).